Consider the following 282-residue polypeptide: Pantothenate synthetase (282 aa).

Residue 30-37 participates in ATP binding; it reads MGYLHEGH. His37 acts as the Proton donor in catalysis. Gln61 contributes to the (R)-pantoate binding site. Gln61 provides a ligand contact to beta-alanine. 147–150 is a binding site for ATP; the sequence is GMKD. Gln153 is a (R)-pantoate binding site. Residues Val176 and 184 to 187 contribute to the ATP site; that span reads KSSR.

This sequence belongs to the pantothenate synthetase family. As to quaternary structure, homodimer.

It localises to the cytoplasm. The enzyme catalyses (R)-pantoate + beta-alanine + ATP = (R)-pantothenate + AMP + diphosphate + H(+). It functions in the pathway cofactor biosynthesis; (R)-pantothenate biosynthesis; (R)-pantothenate from (R)-pantoate and beta-alanine: step 1/1. Its function is as follows. Catalyzes the condensation of pantoate with beta-alanine in an ATP-dependent reaction via a pantoyl-adenylate intermediate. This is Pantothenate synthetase from Bacillus cereus (strain AH187).